A 145-amino-acid chain; its full sequence is Antimicrobial peptide NK-lysin (145 aa).

The N-terminal stretch at 1–22 is a signal peptide; it reads MTSRALLLLASALLGTPGLTFS. Residues 23 to 62 constitute a propeptide that is removed on maturation; sequence GLNPESYDLATAHLSDGEQFCQGLTQEDLQGDLLTERERQ. In terms of domain architecture, Saposin B-type spans 62–142; that stretch reads QGIACWSCRK…VDIKLCKHKA (81 aa). Intrachain disulfides connect Cys66/Cys138, Cys69/Cys132, and Cys97/Cys107. A propeptide spanning residues 141 to 145 is cleaved from the precursor; the sequence is KAGLI.

It localises to the secreted. In terms of biological role, may be an effector molecule of cytotoxic activity. Has antimicrobial activity. This Equus caballus (Horse) protein is Antimicrobial peptide NK-lysin (NKL).